We begin with the raw amino-acid sequence, 5088 residues long: Replicase polyprotein 1ab (5088 aa).

The chain crosses the membrane as a helical span at residues 26–46 (VTNVIQYWTPILTMLLLAIYI). The disordered stretch occupies residues 301 to 323 (EIEDDTEAEETQKTKRKGKLQPQ). 5 helical membrane-spanning segments follow: residues 343-363 (HLTFGPAYMTMLCLISIMSPT), 1132-1152 (GLFLMLYIAALIIILAIAITI), 1156-1176 (TMMMFLKLITIFAYTFGHLLL), 1201-1221 (YGCLLMLGALAIAVIDLLAYI), and 1250-1270 (ILIPYIFTSYGLVLTIIVSYV). Residues His1434 and Cys1539 each act as for 3C-like proteinase in the active site. Helical transmembrane passes span 1729-1749 (FTHTHPAFYIAAACVFGLFFV) and 1758-1778 (ILSSIIFAIPHIYVNYYYGLV). Residues 3093–3112 (KPNCPMVPSEVPVRNKHKSA) are disordered. One can recognise an ExoN domain in the interval 4351–4616 (MNIVMDDCIC…MTQCIYQSFV (266 aa)). Catalysis depends on residues Asp4362, Glu4364, and Asp4481. 4 residues coordinate Zn(2+): Cys4498, Cys4504, Cys4522, and His4525. Residues His4599, Asp4604, Lys4880, Asp4969, Lys4998, and Glu5035 contribute to the active site. The region spanning 4844–5088 (LNNHAALAKA…RQSVFRYSPK (245 aa)) is the Nidovirus-type SAM-dependent 2'-O-MTase domain.

Homodimer. Specific enzymatic cleavages in vivo by its own protease yield mature proteins. 3CL-PRO is autocatalytically processed.

It localises to the membrane. It catalyses the reaction a 5'-end (5'-triphosphoguanosine)-ribonucleoside in mRNA + S-adenosyl-L-methionine = a 5'-end (N(7)-methyl 5'-triphosphoguanosine)-ribonucleoside in mRNA + S-adenosyl-L-homocysteine. It carries out the reaction RNA(n) + a ribonucleoside 5'-triphosphate = RNA(n+1) + diphosphate. The catalysed reaction is ATP + H2O = ADP + phosphate + H(+). The enzyme catalyses a 5'-end (N(7)-methyl 5'-triphosphoguanosine)-ribonucleoside in mRNA + S-adenosyl-L-methionine = a 5'-end (N(7)-methyl 5'-triphosphoguanosine)-(2'-O-methyl-ribonucleoside) in mRNA + S-adenosyl-L-homocysteine + H(+). Cysteine protease responsible for the majority of cleavages of the polyprotein. Recognizes substrates containing the core sequence [NT]-[EHKQSY]-|-[AGNST]. Functionally, the helicase which contains a zinc finger structure displays RNA and DNA duplex-unwinding activities with 5' to 3' polarity. In terms of biological role, RNA-directed RNA polymerase that catalyzes the transcription of viral genomic and subgenomic RNAs. Its function is as follows. Catalyzes the RNA N7-guanylyltransferase reaction to methylate the core cap structure GpppN-RNA into the type-0 cap (m)GpppN-RNA. This Ochlerotatus harrisoni (CAVV) protein is Replicase polyprotein 1ab.